Here is a 550-residue protein sequence, read N- to C-terminus: MAAKDVKFGNDARIKMLEGVNVLADAVKVTLGPKGRNVVLDKSFGAPTITKDGVSVAREIELEDKFQNMGAQMVKEVASQANDAAGDGTTTATVLAQSIIAEGLKAVAAGMNPMDLKRGIDKAVIAAVAALKELSVPCEDTKAIAQVGTISANADATVGNLIAEAMEKVGRDGVITVEEGQALHDELDVVEGMQFDRGYLSPYFINNQEAGSIDLESPFILLVDKKVSNIRELLPALEGVAKASRPLLIIAEDVEGEALATLVVNNMRGIVKVAAVKAPGFGDRRKSMLQDIAVLTAGTVISEEIGLELEKVQLEDLGQAKRITITKENTTIIDGAGEETMIQGRVAQIRQQIEDATSDYDKEKLQERVAKLAGGVAVIKVGAATEVEMKEKKDRVQDALHATRAAVEEGVVAGGGVALIRAASKVAASGLEGDNEEQNVGIRVALRAMESPLRQIVKNAGDEDSVVANNVRAGEGNYGYNAATGVYGDMIAMGILDPTKVTRSALQFAASVAGLMITTEAMITDMPAKDASAMPDMGGMGGMGGMGGMM.

Residues 30 to 33 (TLGP), Lys51, 87 to 91 (DGTTT), Gly415, 481 to 483 (NAA), and Asp497 contribute to the ATP site.

It belongs to the chaperonin (HSP60) family. In terms of assembly, forms a cylinder of 14 subunits composed of two heptameric rings stacked back-to-back. Interacts with the co-chaperonin GroES.

The protein resides in the cytoplasm. The enzyme catalyses ATP + H2O + a folded polypeptide = ADP + phosphate + an unfolded polypeptide.. Functionally, together with its co-chaperonin GroES, plays an essential role in assisting protein folding. The GroEL-GroES system forms a nano-cage that allows encapsulation of the non-native substrate proteins and provides a physical environment optimized to promote and accelerate protein folding. The polypeptide is Chaperonin GroEL (Photobacterium profundum (strain SS9)).